Reading from the N-terminus, the 239-residue chain is Orotidine 5'-phosphate decarboxylase (239 aa).

Residues D10, K33, D60–T69, T124, R186, Q195, G215, and R216 each bind substrate. K62 acts as the Proton donor in catalysis.

It belongs to the OMP decarboxylase family. Type 1 subfamily. Homodimer.

It carries out the reaction orotidine 5'-phosphate + H(+) = UMP + CO2. It functions in the pathway pyrimidine metabolism; UMP biosynthesis via de novo pathway; UMP from orotate: step 2/2. In terms of biological role, catalyzes the decarboxylation of orotidine 5'-monophosphate (OMP) to uridine 5'-monophosphate (UMP). The protein is Orotidine 5'-phosphate decarboxylase of Latilactobacillus sakei subsp. sakei (strain 23K) (Lactobacillus sakei subsp. sakei).